The chain runs to 103 residues: Cell division protein FtsB (103 aa).

At 1–3 (MGK) the chain is on the cytoplasmic side. Residues 4 to 21 (LTLLLLAILVWLQYSLWF) traverse the membrane as a helical segment. The Periplasmic portion of the chain corresponds to 22–103 (GKNGIHDYSR…RAQTAGQNNR (82 aa)). Positions 31–71 (RVNDDVAAQQATNAKLKARNDQLFAEIDDLNGGQEALEERA) form a coiled coil.

It belongs to the FtsB family. In terms of assembly, part of a complex composed of FtsB, FtsL and FtsQ.

Its subcellular location is the cell inner membrane. Essential cell division protein. May link together the upstream cell division proteins, which are predominantly cytoplasmic, with the downstream cell division proteins, which are predominantly periplasmic. This is Cell division protein FtsB from Escherichia fergusonii (strain ATCC 35469 / DSM 13698 / CCUG 18766 / IAM 14443 / JCM 21226 / LMG 7866 / NBRC 102419 / NCTC 12128 / CDC 0568-73).